Reading from the N-terminus, the 965-residue chain is Phosphoenolpyruvate carboxylase (965 aa).

Phosphoserine is present on S11. Active-site residues include H173 and K601.

The protein belongs to the PEPCase type 1 family. Homotetramer. Mg(2+) serves as cofactor.

It is found in the cytoplasm. It catalyses the reaction oxaloacetate + phosphate = phosphoenolpyruvate + hydrogencarbonate. It participates in photosynthesis; C3 acid pathway. With respect to regulation, by light-reversible phosphorylation. Its function is as follows. Through the carboxylation of phosphoenolpyruvate (PEP) it forms oxaloacetate, a four-carbon dicarboxylic acid source for the tricarboxylic acid cycle. In Solanum tuberosum (Potato), this protein is Phosphoenolpyruvate carboxylase (PPC1).